Consider the following 697-residue polypeptide: Polyribonucleotide nucleotidyltransferase (697 aa).

The Mg(2+) site is built by Asp484 and Asp490. The 60-residue stretch at 551–610 folds into the KH domain; that stretch reads PRITTIWVKTDKIRDVIGSGGKNIRGITEATGVSIDIEDSGRINIASTSKEACDKAIKMI. Residues 620-688 form the S1 motif domain; sequence GKLYMGTVKK…KQGKIKLSRK (69 aa).

The protein belongs to the polyribonucleotide nucleotidyltransferase family. Mg(2+) serves as cofactor.

The protein localises to the cytoplasm. The enzyme catalyses RNA(n+1) + phosphate = RNA(n) + a ribonucleoside 5'-diphosphate. Functionally, involved in mRNA degradation. Catalyzes the phosphorolysis of single-stranded polyribonucleotides processively in the 3'- to 5'-direction. In Geobacter sulfurreducens (strain ATCC 51573 / DSM 12127 / PCA), this protein is Polyribonucleotide nucleotidyltransferase.